Reading from the N-terminus, the 273-residue chain is Kit ligand (273 aa).

Residues 1–25 (MKKTQTWILTCIYLQLLLFNPLVKT) form the signal peptide. At 26 to 214 (EGICRNRVTN…KNPPGDSSLH (189 aa)) the chain is on the extracellular side. Intrachain disulfides connect Cys29–Cys114 and Cys68–Cys163. 2 N-linked (GlcNAc...) asparagine; partial glycosylation sites follow: Asn90 and Asn118. A glycan (N-linked (GlcNAc...) asparagine) is linked at Asn145. An O-linked (GalNAc...) serine glycan is attached at Ser167. 2 O-linked (GalNAc...) threonine glycosylation sites follow: Thr168 and Thr180. Asn195 carries an N-linked (GlcNAc...) asparagine glycan. A helical membrane pass occupies residues 215 to 237 (WAAMALPALFSLIIGFAFGALYW). Residues 238–273 (KKRQPSLTRAVENIQINEEDNEISMLQEKEREFQEV) lie on the Cytoplasmic side of the membrane.

The protein belongs to the SCF family. In terms of assembly, homodimer, non-covalently linked. Heterotetramer with KIT, binding two KIT molecules; thereby mediates KIT dimerization and subsequent activation by autophosphorylation. Post-translationally, a soluble form (sKITLG) is produced by proteolytic processing of isoform 1 in the extracellular domain. In terms of processing, found in two differentially glycosylated forms, LMW-SCF and HMW-SCF. LMW-SCF is fully N-glycosylated at Asn-145, partially N-glycosylated at Asn-90, O-glycosylated at Ser-167, Thr-168 and Thr-180, and not glycosylated at Asn-97 or Asn-118. HMW-SCF is N-glycosylated at Asn-118, Asn-90 and Asn-145, O-glycosylated at Ser-167, Thr-168 and Thr-180, and not glycosylated at Asn-97. A soluble form exists as a cleavage product of the extracellular domain.

Its subcellular location is the cell membrane. It localises to the cytoplasm. The protein resides in the cytoskeleton. It is found in the cell projection. The protein localises to the lamellipodium. Its subcellular location is the filopodium. It localises to the secreted. Functionally, ligand for the receptor-type protein-tyrosine kinase KIT. Plays an essential role in the regulation of cell survival and proliferation, hematopoiesis, stem cell maintenance, gametogenesis, mast cell development, migration and function, and in melanogenesis. KITLG/SCF binding can activate several signaling pathways. Promotes phosphorylation of PIK3R1, the regulatory subunit of phosphatidylinositol 3-kinase, and subsequent activation of the kinase AKT1. KITLG/SCF and KIT also transmit signals via GRB2 and activation of RAS, RAF1 and the MAP kinases MAPK1/ERK2 and/or MAPK3/ERK1. KITLG/SCF and KIT promote activation of STAT family members STAT1, STAT3 and STAT5. KITLG/SCF and KIT promote activation of PLCG1, leading to the production of the cellular signaling molecules diacylglycerol and inositol 1,4,5-trisphosphate. KITLG/SCF acts synergistically with other cytokines, probably interleukins. This Homo sapiens (Human) protein is Kit ligand.